The sequence spans 417 residues: 3-isopropylmalate dehydratase large subunit 2 (417 aa).

The [4Fe-4S] cluster site is built by Cys298, Cys358, and Cys361.

Belongs to the aconitase/IPM isomerase family. LeuC type 2 subfamily. Heterodimer of LeuC and LeuD. The cofactor is [4Fe-4S] cluster.

It carries out the reaction (2R,3S)-3-isopropylmalate = (2S)-2-isopropylmalate. It participates in amino-acid biosynthesis; L-leucine biosynthesis; L-leucine from 3-methyl-2-oxobutanoate: step 2/4. Catalyzes the isomerization between 2-isopropylmalate and 3-isopropylmalate, via the formation of 2-isopropylmaleate. The chain is 3-isopropylmalate dehydratase large subunit 2 from Thermotoga maritima (strain ATCC 43589 / DSM 3109 / JCM 10099 / NBRC 100826 / MSB8).